Consider the following 517-residue polypeptide: UDP-N-acetylmuramoyl-tripeptide--D-alanyl-D-alanine ligase (517 aa).

138 to 144 serves as a coordination point for ATP; sequence GSSGKTS.

This sequence belongs to the MurCDEF family. MurF subfamily.

It localises to the cytoplasm. It carries out the reaction D-alanyl-D-alanine + UDP-N-acetyl-alpha-D-muramoyl-L-alanyl-gamma-D-glutamyl-meso-2,6-diaminopimelate + ATP = UDP-N-acetyl-alpha-D-muramoyl-L-alanyl-gamma-D-glutamyl-meso-2,6-diaminopimeloyl-D-alanyl-D-alanine + ADP + phosphate + H(+). Its pathway is cell wall biogenesis; peptidoglycan biosynthesis. Its function is as follows. Involved in cell wall formation. Catalyzes the final step in the synthesis of UDP-N-acetylmuramoyl-pentapeptide, the precursor of murein. This is UDP-N-acetylmuramoyl-tripeptide--D-alanyl-D-alanine ligase from Mycobacterium leprae (strain TN).